Here is a 350-residue protein sequence, read N- to C-terminus: CMP-N-acetylneuraminate-beta-galactosamide-alpha-2,3-sialyltransferase 2 (350 aa).

The Cytoplasmic portion of the chain corresponds to 1–6; sequence MKCSLR. A helical; Signal-anchor for type II membrane protein membrane pass occupies residues 7–27; that stretch reads VWFLSMAFLLVFIMSLLFTYS. Residues 28–350 are Lumenal-facing; the sequence is HHSMATLPYL…ASKIEVYRGN (323 aa). Disulfide bonds link cysteine 70–cysteine 75, cysteine 72–cysteine 149, and cysteine 152–cysteine 291. Residues glutamine 116, asparagine 157, and asparagine 180 each contribute to the substrate site. N-linked (GlcNAc...) asparagine glycosylation occurs at asparagine 211. Substrate is bound by residues tyrosine 240, tyrosine 276, glycine 280, glycine 300, histidine 309, and histidine 326.

Belongs to the glycosyltransferase 29 family. In terms of assembly, homodimer; disulfide-linked. Homodimer formation occurs in the endoplasmic reticulum. The soluble form derives from the membrane form by proteolytic processing. In terms of processing, N-glycosylated; necessary for proper exit from endoplasmic reticulum and trafficking to the Golgi apparatus.

It is found in the golgi apparatus. Its subcellular location is the golgi stack membrane. The protein localises to the secreted. It catalyses the reaction a beta-D-galactosyl-(1-&gt;3)-N-acetyl-alpha-D-galactosaminyl derivative + CMP-N-acetyl-beta-neuraminate = an N-acetyl-alpha-neuraminyl-(2-&gt;3)-beta-D-galactosyl-(1-&gt;3)-N-acetyl-alpha-D-galactosaminyl derivative + CMP + H(+). The catalysed reaction is a ganglioside GM1 (d18:1(4E)) + CMP-N-acetyl-beta-neuraminate = a ganglioside GD1a (d18:1(4E)) + CMP + H(+). It carries out the reaction ganglioside GM1 (d18:1(4E)/18:0) + CMP-N-acetyl-beta-neuraminate = ganglioside GD1a (18:1(4E)/18:0) + CMP + H(+). The enzyme catalyses a ganglioside GA1 + CMP-N-acetyl-beta-neuraminate = a ganglioside GM1b + CMP + H(+). It catalyses the reaction a ganglioside GA1 (d18:1(4E)) + CMP-N-acetyl-beta-neuraminate = a ganglioside GM1b (d18:1(4E)) + CMP + H(+). The catalysed reaction is a globoside GalGb4Cer + CMP-N-acetyl-beta-neuraminate = a globoside MSGG + CMP + H(+). Its pathway is protein modification; protein glycosylation. The protein operates within glycolipid biosynthesis. Its function is as follows. A beta-galactoside alpha2-3 sialyltransferase primarily involved in terminal sialylation of ganglio and globo series glycolipids. Catalyzes the transfer of sialic acid (N-acetyl-neuraminic acid; Neu5Ac) from the nucleotide sugar donor CMP-Neu5Ac onto acceptor Galbeta-(1-&gt;3)-GalNAc-terminated glycoconjugates through an alpha2-3 linkage. Sialylates GM1/GM1a, GA1/asialo-GM1 gangliosides to form GD1a and GM1b, respectively. Together with ST3GAL3, primarily responsible for biosynthesis of brain gangliosides that function as ligand for myelin-associated glycoprotein MAG on axons, regulating MAG expression and axonal myelin stability and regeneration. Responsible for the sialylation of the pluripotent stem cell- and cancer stem cell-associated antigen SSEA3, forming SSEA4. Sialylates with low efficiency asialofetuin, presumably onto O-glycosidically linked Galbeta-(1-&gt;3)-GalNAc-O-Ser. The polypeptide is CMP-N-acetylneuraminate-beta-galactosamide-alpha-2,3-sialyltransferase 2 (St3gal2) (Rattus norvegicus (Rat)).